The sequence spans 69 residues: DNA-directed RNA polymerase subunit epsilon (69 aa).

The protein belongs to the RNA polymerase subunit epsilon family. RNAP is composed of a core of 2 alpha, a beta and a beta' subunit. The core is associated with a delta subunit, and at least one of epsilon or omega. When a sigma factor is associated with the core the holoenzyme is formed, which can initiate transcription.

The catalysed reaction is RNA(n) + a ribonucleoside 5'-triphosphate = RNA(n+1) + diphosphate. Functionally, a non-essential component of RNA polymerase (RNAP). The protein is DNA-directed RNA polymerase subunit epsilon of Lysinibacillus sphaericus (strain C3-41).